Here is a 124-residue protein sequence, read N- to C-terminus: Small ribosomal subunit protein uS12 (124 aa).

The segment at 105 to 124 (QGVKNRKQARSRYGAKKEKG) is disordered. Positions 108 to 118 (KNRKQARSRYG) are enriched in basic residues.

Belongs to the universal ribosomal protein uS12 family. Part of the 30S ribosomal subunit. Contacts proteins S8 and S17. May interact with IF1 in the 30S initiation complex.

With S4 and S5 plays an important role in translational accuracy. Functionally, interacts with and stabilizes bases of the 16S rRNA that are involved in tRNA selection in the A site and with the mRNA backbone. Located at the interface of the 30S and 50S subunits, it traverses the body of the 30S subunit contacting proteins on the other side and probably holding the rRNA structure together. The combined cluster of proteins S8, S12 and S17 appears to hold together the shoulder and platform of the 30S subunit. The polypeptide is Small ribosomal subunit protein uS12 (rpsL) (Mycobacterium bovis (strain ATCC BAA-935 / AF2122/97)).